We begin with the raw amino-acid sequence, 138 residues long: Large ribosomal subunit protein bL17 (138 aa).

This sequence belongs to the bacterial ribosomal protein bL17 family. As to quaternary structure, part of the 50S ribosomal subunit. Contacts protein L32.

This Halorhodospira halophila (strain DSM 244 / SL1) (Ectothiorhodospira halophila (strain DSM 244 / SL1)) protein is Large ribosomal subunit protein bL17.